We begin with the raw amino-acid sequence, 240 residues long: FAS1 domain-containing protein AN1527 (240 aa).

An N-terminal signal peptide occupies residues 1-24 (MRQLSTTALVLFLFFYCSISTAWS). One can recognise an FAS1 domain in the interval 91 to 239 (EPTISDVLPK…GEVWVIDGVI (149 aa)).

Its subcellular location is the vacuole. The polypeptide is FAS1 domain-containing protein AN1527 (Emericella nidulans (strain FGSC A4 / ATCC 38163 / CBS 112.46 / NRRL 194 / M139) (Aspergillus nidulans)).